A 453-amino-acid polypeptide reads, in one-letter code: MSENNEEQHQQQQQQQPVAVETPSAVEAPASADPSSEQSVAVEGNSEQAEDNQGENDPSVVPANAITGGRETSDRVLYVGNLDKAITEDILKQYFQVGGPIANIKIMIDKNNKNVNYAFVEYHQSHDANIALQTLNGKQIENNIVKINWAFQSQQSSSDDTFNLFVGDLNVNVDDETLRNAFKDFPSYLSGHVMWDMQTGSSRGYGFVSFTSQDDAQNAMDSMQGQDLNGRPLRINWAAKRDNNNNNNYQQRRNYGNNNRGGFRQYNSNNNNNMNMGMNMNMNMNMNNSRGMPPSSMGMPIGAMPLPSQGQPQQSQTIGLPPQVNPQAVDHIIRSAPPRVTTAYIGNIPHFATEADLIPLFQNFGFILDFKHYPEKGCCFIKYDTHEQAAVCIVALANFPFQGRNLRTGWGKERSNFMPQQQQQGGQPLIMNDQQQPVMSEQQQQQQQQQQQQ.

A disordered region spans residues 1 to 67 (MSENNEEQHQ…PSVVPANAIT (67 aa)). Residue serine 2 is modified to N-acetylserine. 2 consecutive RRM domains span residues 75–152 (RVLY…WAFQ) and 162–240 (FNLF…WAAK). Residues 241-262 (RDNNNNNNYQQRRNYGNNNRGG) are disordered. Positions 244–262 (NNNNNYQQRRNYGNNNRGG) are enriched in low complexity. Position 260 is an omega-N-methylarginine (arginine 260). An RNA-binding RGG-box region spans residues 260–264 (RGGFR). Residues 341–413 (TTAYIGNIPH…RNLRTGWGKE (73 aa)) enclose the RRM 3 domain. Positions 419 to 453 (PQQQQQGGQPLIMNDQQQPVMSEQQQQQQQQQQQQ) are disordered. A compositionally biased stretch (low complexity) spans 434-453 (QQQPVMSEQQQQQQQQQQQQ).

As to quaternary structure, interacts with NAB2.

Its subcellular location is the cytoplasm. The protein resides in the nucleus. It is found in the P-body. The protein localises to the stress granule. Functionally, may be associated with hnRNA within the nucleus and remains associated during nucleocytoplasmic mRNA transport, once the proteins are in the cytoplasm, disassembly of PUB1-RNA complexes may occur prior to PAB1 binding and formation of a translationally competent RNP complex. Binds to polyadenylated RNA; prefers to bind poly(rU); binds to T-rich single-stranded DNA. The chain is Nuclear and cytoplasmic polyadenylated RNA-binding protein PUB1 from Saccharomyces cerevisiae (strain ATCC 204508 / S288c) (Baker's yeast).